Reading from the N-terminus, the 1477-residue chain is Ring canal kelch protein (1477 aa).

Disordered stretches follow at residues 19–62 (LSNG…PGLG), 76–96 (LLQQ…EGSG), and 108–137 (SQNS…YSNE). Positions 20 to 46 (SNGNSNNNNQQQQQQQQGQNPQQPAQN) are enriched in low complexity. Phosphoserine is present on residues serine 108 and serine 111. In terms of domain architecture, BTB spans 157 to 223 (CDVILVADDV…VYTATVEVNE (67 aa)). Kelch repeat units follow at residues 404–449 (ILLV…VLGD), 450–496 (KVYA…VLNG), 498–543 (IYAV…VVHG), 545–592 (LYAV…VLNN), 594–639 (LYAV…AHDG), and 641–687 (LYVV…MIDK). Residue selenocysteine 690 is a non-standard amino acid, selenocysteine. 5 disordered regions span residues 744–841 (PAAP…PQRI), 1119–1200 (HSAA…GNGT), 1291–1326 (RDAN…QYED), 1359–1416 (PLLQ…FKPK), and 1446–1477 (PVSL…EHND). Composition is skewed to low complexity over residues 763–813 (APIG…ANNN) and 820–839 (AAPA…QQPQ). Over residues 1125–1137 (IPSSSNINANRTT) the composition is skewed to polar residues. The span at 1166–1192 (KTTSTGSGKSVTLAKKTSTAAARSSSS) shows a compositional bias: low complexity. 2 stretches are compositionally biased toward low complexity: residues 1374-1391 (QQRR…QSQQ) and 1456-1477 (TTSS…EHND).

In terms of tissue distribution, both proteins are expressed in ovaries, male testis, ovariectomized females, cuticle, salivary gland and imaginal disks. Kelch short protein is the predominant form and is also expressed in fat bodies. On entry into metamorphosis levels of full-length protein increase in testis and imaginal disks.

The protein localises to the cytoplasm. It localises to the cytoskeleton. Functionally, component of ring canals that regulates the flow of cytoplasm between cells. May be involved in the regulation of cytoplasm flow from nurse cells to the oocyte during oogenesis. Binds actin. This Drosophila melanogaster (Fruit fly) protein is Ring canal kelch protein (kel).